The sequence spans 28 residues: Ranatuerin-2AVa (28 aa).

Residues Cys-23 and Cys-28 are joined by a disulfide bond.

In terms of tissue distribution, expressed by the skin glands.

The protein resides in the secreted. Its function is as follows. Has antibacterial activity against the Gram positive bacterium L.lactis. The sequence is that of Ranatuerin-2AVa from Rana arvalis (Moor frog).